The sequence spans 556 residues: MDNAELAIGIDLGTTNSLIAVWKDGAAQLIPNKFGEYLTPSIISMDENNHILVGKPAVSRRTSHPDKTAALFKRAMGSNTNWRLGSDTFNAPELSSLVLRSLKEDAEEFLQRPIKDVVISVPAYFSDEQRKHTRLAAELAGLNAVRLINEPTAAAMAYGLHTQQNTRSLVFDLGGGTFDVTVLEYATPVIEVHASAGDNFLGGEDFTHMLVDEVLKRADVARTTLNESELAALYACVEAAKCSNQSPLHIRWQYQEETRECEFYENELEDLWLPLLNRLRVPIEQALRDARLKPSQIDSLVLVGGASQMPLVQRIAVRLFGKLPYQSYDPSTIVALGAAIQAACRLRSEDIEEVILTDICPYSLGVEVNRQGVSGIFSPIIERNTTVPVSRVETYSTMHPEQDSITVNVYQGENHKVKNNILVESFDVPLKKTGAYQSIDIRFSYDINGLLEVDVLLEDGSVKSRVINHSPVTLSAQQIEESRTRLSALKIYPRDMLINRTFKAKLEELWARALGDEREEIGRVITDFDAALQSNDMARVDEVRRRASDYLAIEIP.

It belongs to the heat shock protein 70 family.

Its function is as follows. Probable chaperone. Has ATPase activity. Not stimulated by DnaJ. In Escherichia coli (strain K12), this protein is Chaperone protein HscC (hscC).